The following is a 586-amino-acid chain: Alanine racemase ungC (586 aa).

The disordered stretch occupies residues 187-206 (RVGALPAAASTASPMGSSLP). Over residues 196–206 (STASPMGSSLP) the composition is skewed to polar residues.

The protein belongs to the trans-sulfuration enzymes family. Requires pyridoxal 5'-phosphate as cofactor.

The enzyme catalyses L-alanine = D-alanine. Its pathway is secondary metabolite biosynthesis. Functionally, alanine racemase; part of the gene cluster that mediates the biosynthesis of the unguisins, gamma-aminobutyric acid (GABA)-containing fungal cyclic heptapeptides with the amino acid sequence cyclo-(D-Ala1-D-Val2-L-Phe3-D-Val4-D-Ala5-D-Trp6-GABA7) for unguisin A and cyclo-(D-Ala1-D-Val2-L-Leu3-D-Val4-D-Ala5-D-Trp6-GABA7) for unguisin B. Within the pathway, the alanine racemase ungC catalyzes the interconversion of L-alanine and D-alanine, providing the D-alanine which is accepted by the first adenylation domain of the nonribosomal peptide synthetase (NRPS) ungA. UngA is the main enzyme within the cluster which condenses the 7 residues using its respective 7 modules. The terminal condensation domain (Ct) is involved in cyclization with D-alanine and thereby releasing of unguisins A and B. Finally, the hydrolase ungD catalyzes the hydrolysis between the D-tryptophan and GABA residues of unguisins A and B to produce the corresponding linear peptides. The sequence is that of Alanine racemase ungC from Aspergillus violaceofuscus (strain CBS 115571).